The chain runs to 1050 residues: Sentrin-specific protease 7 (1050 aa).

Disordered regions lie at residues 1 to 28 (MDKRKLGRRPSSSEIITEGKRKKSSSDL), 183 to 288 (PPVT…DVKY), and 304 to 365 (RRLR…KSDF). A phosphoserine mark is found at Ser-11, Ser-12, Ser-13, and Ser-25. Over residues 196–211 (LQSEQLSSSSDGSLES) the composition is skewed to low complexity. Residues 259 to 271 (ISDTQPEDLNSGS) are compositionally biased toward polar residues. Positions 273–288 (GCDHLEQESRNKDVKY) are enriched in basic and acidic residues. Positions 310-320 (LPDSQYCTSLD) are enriched in polar residues. 2 stretches are compositionally biased toward basic and acidic residues: residues 321–331 (KSTEQTKKQED) and 338–365 (EFEKPSENYHQDPKLPEEITTKPTKSDF). Ser-373, Ser-433, Ser-443, and Ser-444 each carry phosphoserine. The disordered stretch occupies residues 443-476 (SSDEEGPVEHKSSEILKLQSKQDRETTNENESTS). Basic and acidic residues predominate over residues 449–469 (PVEHKSSEILKLQSKQDRETT). The tract at residues 760–1050 (LGVTNEDLEC…HLQQQKGSSS (291 aa)) is protease. Residues His-860 and Asp-939 contribute to the active site. The Nucleophile role is filled by Cys-992.

This sequence belongs to the peptidase C48 family.

Its subcellular location is the cytoplasm. In terms of biological role, protease that acts as a positive regulator of the cGAS-STING pathway by catalyzing desumoylation of CGAS. Desumoylation of CGAS promotes DNA-binding activity of CGAS, subsequent oligomerization and activation. Deconjugates SUMO2 and SUMO3 from targeted proteins, but not SUMO1. Catalyzes the deconjugation of poly-SUMO2 and poly-SUMO3 chains. Has very low efficiency in processing full-length SUMO proteins to their mature forms. In Homo sapiens (Human), this protein is Sentrin-specific protease 7.